The primary structure comprises 177 residues: Large ribosomal subunit protein uL6 (177 aa).

The protein belongs to the universal ribosomal protein uL6 family. As to quaternary structure, part of the 50S ribosomal subunit.

Its function is as follows. This protein binds to the 23S rRNA, and is important in its secondary structure. It is located near the subunit interface in the base of the L7/L12 stalk, and near the tRNA binding site of the peptidyltransferase center. The protein is Large ribosomal subunit protein uL6 of Rickettsia akari (strain Hartford).